Consider the following 457-residue polypeptide: Peptidyl-prolyl cis-trans isomerase FKBP5 (457 aa).

An N-acetylmethionine modification is found at M1. Positions 1 to 26 (MTTDEGAKNSGESPTATVAEQGEDIT) are disordered. S13 carries the post-translational modification Phosphoserine. An N6-acetyllysine modification is found at K28. Residues 50–138 (GDKVYVHYKG…FFEIELLDFK (89 aa)) form the PPIase FKBP-type 1 domain. K155 bears the N6-acetyllysine mark. The PPIase FKBP-type 2 domain maps to 165 to 251 (GATVEIHLEG…IYEVTLKSFE (87 aa)). TPR repeat units follow at residues 268–301 (AAIVKEKGTVYFKGGKYMRAVIQYGKIVSWLEME), 317–350 (LAAFLNLAMCYLKLREYTKAVECCDKALGLDSAN), and 351–384 (EKGLYRRGEAQLLMNEFESAKGDFEKVLEVNPQN). Residues 421–457 (AKEEANKAMGKKTSEGVTNEKGTDSSAVEEEKAEGHV) are disordered. S445 carries the phosphoserine modification.

Part of a heteromultimeric cytoplasmic complex with HSP90AA1, HSPA1A/HSPA1B and steroid receptors. Upon ligand binding dissociates from the complex and FKBP4 takes its place. Interacts with functionally mature heterooligomeric progesterone receptor complexes along with HSP90 and TEBP. Interacts with NR3C1. Interacts with Akt/AKT1 and PHLPP1; enhancing dephosphorylation and subsequent activation of Akt/AKT1. Interacts with IFI44L; this interaction modulates the kinase activity of IKBKB and IKBKE. Interacts with IKBKB and IKBKE. Post-translationally, acetylation impairs ability to promote interaction between Akt/AKT1 and PHLPP1. Deacetylation by SIRT7 promotes interaction between Akt/AKT1 and PHLPP1, leading to suppress Akt/AKT1 activation. Ubiquitinated, leading to degradation in a proteasome-dependent manner. Deubiquitinated by USP49, leading to stabilization.

It is found in the cytoplasm. It localises to the nucleus. It carries out the reaction [protein]-peptidylproline (omega=180) = [protein]-peptidylproline (omega=0). Inhibited by both FK506 and rapamycin. Immunophilin protein with PPIase and co-chaperone activities. Component of unligated steroid receptors heterocomplexes through interaction with heat-shock protein 90 (HSP90). Plays a role in the intracellular trafficking of heterooligomeric forms of steroid hormone receptors maintaining the complex into the cytoplasm when unliganded. Acts as a regulator of Akt/AKT1 activity by promoting the interaction between Akt/AKT1 and PHLPP1, thereby enhancing dephosphorylation and subsequent activation of Akt/AKT1. Interacts with IKBKE and IKBKB which facilitates IKK complex assembly leading to increased IKBKE and IKBKB kinase activity, NF-kappaB activation, and IFN production. This is Peptidyl-prolyl cis-trans isomerase FKBP5 (FKBP5) from Chlorocebus aethiops (Green monkey).